Reading from the N-terminus, the 330-residue chain is MFSIKILLAIILDLFLGDPSCYPHPVRCIGLAINRWEKFYRPRVAQPFWAGVLTVCSVLTLVILTLAVFFTLLAIFPPIVTDFAAVLLLYTTVAIKDLKKESMAVYRALIQGEDLPKTRKLLARIVGRDTENLDRPAIIRATVETVGENLADGIIAPLFWAVALSIFAPLLGVKAIVLASVGAMSYKAINTMDSMLGYKNERYILFGRAAARLDDWANWLPARCTALGIVAISFMAGYNGPQAWKIFKRDRYQHTSPNAGHPEAALAGALNIRLCGPSVYFGNIVEKPYIGNALRAIEPDDIRQANRIVLFTTFLLSLLFLLFRFVLTGL.

4 helical membrane-spanning segments follow: residues 60-80 (TLVI…PPIV), 153-173 (GIIA…LLGV), 227-247 (LGIV…WKIF), and 308-328 (IVLF…FVLT).

This sequence belongs to the CobD/CbiB family.

The protein localises to the cell membrane. It functions in the pathway cofactor biosynthesis; adenosylcobalamin biosynthesis. Functionally, converts cobyric acid to cobinamide by the addition of aminopropanol on the F carboxylic group. The chain is Cobalamin biosynthesis protein CobD from Desulfotalea psychrophila (strain LSv54 / DSM 12343).